The following is a 1099-amino-acid chain: Adenylate-forming reductase Nps11 (1099 aa).

Residues 29–360 (AEHNSNVPFF…GTECGGLNSM (332 aa)) are adenylation (A) domain. AMP-binding positions include H244, 347–348 (NV), T352, and 432–435 (LVGR). The region spanning 578 to 664 (WSEESLVVWL…RLSQALARVV (87 aa)) is the Carrier domain. S613 is modified (O-(pantetheine 4'-phosphoryl)serine). Positions 717–952 (LTGSTGGLGS…VVSWLPPHAV (236 aa)) are reductase (R) domain. Residues 721-724 (TGGL), 809-811 (NAW), Y883, and K887 contribute to the NADP(+) site.

The protein belongs to the adenylate-forming reductase family.

In terms of biological role, adenylate-forming reductase, a natural product biosynthesis enzyme that resembles non-ribosomal peptide synthetases, yet serves to modify one substrate, rather than to condense two or more building blocks. The A-domain preferentially accepts benzoic acid as substrate. The natural product of the enzyme is not yet known. The polypeptide is Adenylate-forming reductase Nps11 (Serpula lacrymans var. lacrymans (strain S7.9) (Dry rot fungus)).